A 451-amino-acid polypeptide reads, in one-letter code: MNLTIKEEDFTNTFMKNEESFNTFRVTKVKRWNAKRLFKILFVTVFIVLAGGFSYYIFENFVFQKNRKINHIIKTSKYSTVGFNIENSYDRLMKTIKEHKLKNYIKESVKLFNKGLTKKSYLGSEFDNVELKDLANVLSFGEAKLGDNGQKFNFLFHTASSNVWVPSIKCTSESCESKNHYDSSKSKTYEKDDTPVKLTSKAGTISGIFSKDLVTIGKLSVPYKFIEMTEIVGFEPFYSESDVDGVFGLGWKDLSIGSIDPYIVELKTQNKIEQAVYSIYLPPENKNKGYLTIGGIEERFFDGPLNYEKLNHDLMWQVDLDVHFGNVSSKKANVILDSATSVITVPTEFFNQFVESASVFKVPFLSLYVTTCGNTKLPTLEYRSPNKVYTLEPKQYLEPLENIFSALCMLNIVPIDLEKNTFVLGDPFMRKYFTVYDYDNHTVGFALAKNL.

Residues 1–37 (MNLTIKEEDFTNTFMKNEESFNTFRVTKVKRWNAKRL) lie on the Cytoplasmic side of the membrane. Positions 1–123 (MNLTIKEEDF…KGLTKKSYLG (123 aa)) are excised as a propeptide. The helical; Signal-anchor for type II membrane protein transmembrane segment at 38–58 (FKILFVTVFIVLAGGFSYYIF) threads the bilayer. At 59–451 (ENFVFQKNRK…TVGFALAKNL (393 aa)) the chain is on the lumenal side. The region spanning 139–446 (SFGEAKLGDN…DYDNHTVGFA (308 aa)) is the Peptidase A1 domain. 2 disulfides stabilise this stretch: cysteine 170–cysteine 175 and cysteine 372–cysteine 408.

Belongs to the peptidase A1 family. In terms of assembly, probable homodimer; in the zymogen form. Monomer; in the active form. Acidification disrupts homodimerization. Component of the hemozoin formation complex (HFC) composed of falcipains FP2A and/or FP2B, plasmepsins PMII, PMIII/HAP and PMIV, heme detoxifying protein HDP and falcilysin FLN. The HFC complex is involved in hemoglobin degradation and detoxification of heme in the food vacuole during the asexual blood stage. Proteolytically cleaved into the soluble active mature form by cysteine proteases in the digestive vacuole of trophozoites. Proteolysis requires an acidic environment. Transprocessing may serve as an alternate activation system.

Its subcellular location is the membrane. It is found in the vacuole lumen. The catalysed reaction is Hydrolysis of the bonds linking certain hydrophobic residues in hemoglobin or globin. Also cleaves small molecules substrates such as Ala-Leu-Glu-Arg-Thr-Phe-|-Phe(NO2)-Ser-Phe-Pro-Thr.. With respect to regulation, dimerization causes loss of catalytic activity. Inhibited by pepstatin A. Inhibited by Zn(2+). During the asexual blood stage, catalyzes the cleavage of denatured host hemoglobin (Hb) or globins. Digestion of host Hb is an essential step which provides the parasite with amino acids for protein synthesis, and regulates osmolarity. This is Plasmepsin III from Plasmodium falciparum (isolate 3D7).